A 303-amino-acid chain; its full sequence is Cyclin-dependent kinase B1-1 (303 aa).

One can recognise a Protein kinase domain in the interval 4-295; it reads YEKLEKVGEG…AKAAMEHPYF (292 aa). Residues 10–18 and Lys-33 contribute to the ATP site; that span reads VGEGTYGKV. Thr-14 bears the Phosphothreonine mark. Residue Tyr-15 is modified to Phosphotyrosine. Asp-136 functions as the Proton acceptor in the catalytic mechanism. Thr-170 carries the post-translational modification Phosphothreonine.

Belongs to the protein kinase superfamily. CMGC Ser/Thr protein kinase family. CDC2/CDKX subfamily. As to expression, expressed in actively dividing cells: root and shoot apical meristems, and young leaves.

The enzyme catalyses L-seryl-[protein] + ATP = O-phospho-L-seryl-[protein] + ADP + H(+). It catalyses the reaction L-threonyl-[protein] + ATP = O-phospho-L-threonyl-[protein] + ADP + H(+). The catalysed reaction is [DNA-directed RNA polymerase] + ATP = phospho-[DNA-directed RNA polymerase] + ADP + H(+). This is Cyclin-dependent kinase B1-1 (CDKB1-1) from Oryza sativa subsp. japonica (Rice).